The following is a 253-amino-acid chain: 3-deoxy-manno-octulosonate cytidylyltransferase (253 aa).

Belongs to the KdsB family.

Its subcellular location is the cytoplasm. The catalysed reaction is 3-deoxy-alpha-D-manno-oct-2-ulosonate + CTP = CMP-3-deoxy-beta-D-manno-octulosonate + diphosphate. It participates in nucleotide-sugar biosynthesis; CMP-3-deoxy-D-manno-octulosonate biosynthesis; CMP-3-deoxy-D-manno-octulosonate from 3-deoxy-D-manno-octulosonate and CTP: step 1/1. The protein operates within bacterial outer membrane biogenesis; lipopolysaccharide biosynthesis. Activates KDO (a required 8-carbon sugar) for incorporation into bacterial lipopolysaccharide in Gram-negative bacteria. This chain is 3-deoxy-manno-octulosonate cytidylyltransferase, found in Aeromonas hydrophila subsp. hydrophila (strain ATCC 7966 / DSM 30187 / BCRC 13018 / CCUG 14551 / JCM 1027 / KCTC 2358 / NCIMB 9240 / NCTC 8049).